The following is a 218-amino-acid chain: Adenylate kinase (218 aa).

An ATP-binding site is contributed by 10–15 (GAGKGT). Residues 30 to 59 (STGDMLRNAAKEGKPLGLEAKKIMDAGQLV) are NMP. AMP is bound by residues T31, R36, 57–59 (QLV), 85–88 (GFPR), and Q92. Residues 122-159 (GRRVHLASGRSYHVMFNPPKQEGLDDATGEPLVQRADD) form an LID region. ATP is bound by residues R123 and 132-133 (SY). 2 residues coordinate AMP: R156 and R167. Residue G203 coordinates ATP.

The protein belongs to the adenylate kinase family. Monomer.

The protein resides in the cytoplasm. The catalysed reaction is AMP + ATP = 2 ADP. It participates in purine metabolism; AMP biosynthesis via salvage pathway; AMP from ADP: step 1/1. Its function is as follows. Catalyzes the reversible transfer of the terminal phosphate group between ATP and AMP. Plays an important role in cellular energy homeostasis and in adenine nucleotide metabolism. The polypeptide is Adenylate kinase (Chlorobium chlorochromatii (strain CaD3)).